Here is a 526-residue protein sequence, read N- to C-terminus: Peptide chain release factor 3 (526 aa).

The region spanning 9–277 is the tr-type G domain; that stretch reads NKRRTFAIIS…DFVEYAPGPQ (269 aa). GTP-binding positions include 18–25, 86–90, and 140–143; these read SHPDAGKT, DTPGH, and NKLD.

It belongs to the TRAFAC class translation factor GTPase superfamily. Classic translation factor GTPase family. PrfC subfamily.

The protein resides in the cytoplasm. Increases the formation of ribosomal termination complexes and stimulates activities of RF-1 and RF-2. It binds guanine nucleotides and has strong preference for UGA stop codons. It may interact directly with the ribosome. The stimulation of RF-1 and RF-2 is significantly reduced by GTP and GDP, but not by GMP. The chain is Peptide chain release factor 3 from Legionella pneumophila (strain Corby).